Reading from the N-terminus, the 225-residue chain is C-reactive protein (225 aa).

A signal peptide spans 1–19 (MEKLLWCLLIMISFSRTFG). A Pentraxin (PTX) domain is found at 24 to 225 (FKKAFVFPKE…DVFIKPQLWS (202 aa)). An intrachain disulfide couples C55 to C116. The Ca(2+) site is built by N80, E157, Q158, D159, and Q169.

Belongs to the pentraxin family. Homopentamer. Pentraxin (or pentaxin) have a discoid arrangement of 5 non-covalently bound subunits. Interacts with FCN1; may regulate monocyte activation by FCN1. Ca(2+) serves as cofactor. In terms of tissue distribution, found in plasma.

It is found in the secreted. Functionally, displays several functions associated with host defense: it promotes agglutination, bacterial capsular swelling, phagocytosis and complement fixation through its calcium-dependent binding to phosphorylcholine. Can interact with DNA and histones and may scavenge nuclear material released from damaged circulating cells. The polypeptide is C-reactive protein (Crp) (Mus musculus (Mouse)).